Consider the following 442-residue polypeptide: Tryptophan synthase beta chain 2 (442 aa).

An N6-(pyridoxal phosphate)lysine modification is found at Lys-110.

It belongs to the TrpB family. As to quaternary structure, tetramer of two alpha and two beta chains. Pyridoxal 5'-phosphate serves as cofactor.

The enzyme catalyses (1S,2R)-1-C-(indol-3-yl)glycerol 3-phosphate + L-serine = D-glyceraldehyde 3-phosphate + L-tryptophan + H2O. It functions in the pathway amino-acid biosynthesis; L-tryptophan biosynthesis; L-tryptophan from chorismate: step 5/5. In terms of biological role, the beta subunit is responsible for the synthesis of L-tryptophan from indole and L-serine. The sequence is that of Tryptophan synthase beta chain 2 from Thermococcus kodakarensis (strain ATCC BAA-918 / JCM 12380 / KOD1) (Pyrococcus kodakaraensis (strain KOD1)).